We begin with the raw amino-acid sequence, 602 residues long: MSSMRTHYCGLVTEQLSGQEVALTGWVQRRRDHGGVIFIDLRDREGLVQVVCDPDRPEMFKAAEEIRNEYCIRITGKVRPRPAGTENTNLTSGKIEVLCYELTVLNPSVTPPFQLDDDNLSETTRLTHRVLDLRRPQMQYNLRLRYKVAMEVRKYLDAQGFIDIETPMLGKSTPEGARDYLVPSRVNPGHFFALPQSPQIFKQMLMVSGFDRYYQITKCFRDEDLRADRQPEFTQIDCETSFLTEQEIRDLFEDMMRTVFKNAIDVDLDAKFPVMEFREAMARFGSDKPDLRVKLEFTELTDVMKDVDFKVFSGPANSDNGRVVGLRVPGGGAISRGEIDAYTQFVGIYGAKGLAWVKVNEVAKGRDGLQSPIVKNLHDAAITEILKRTGAQDGDIIFFGADKAKVVNDAIGALRLKIGHSEFGKASGLFEDVWKPLWVVDFPMFEYDEEDARWVAMHHPFTSPKDEHMQYLETDPGKCIAKAYDMVLNGWEMGGGSVRIYRSDIQSKVFRALKINDEEARAKFGYLLDALQYGAPPHGGLAFGLDRIVTMMAGADSIRDVIAFPKTQRAQDLLTQAPSAVDEKQLRELHIRLRATEPKTTV.

L-aspartate is bound at residue Glu-175. Positions Gln-199–Lys-202 are aspartate. L-aspartate is bound at residue Arg-221. ATP is bound by residues Arg-221 to Glu-223 and Gln-230. Residue His-458 coordinates L-aspartate. Glu-492 contacts ATP. Position 499 (Arg-499) interacts with L-aspartate. Gly-544–Arg-547 contributes to the ATP binding site.

It belongs to the class-II aminoacyl-tRNA synthetase family. Type 1 subfamily. In terms of assembly, homodimer.

It localises to the cytoplasm. The catalysed reaction is tRNA(Asx) + L-aspartate + ATP = L-aspartyl-tRNA(Asx) + AMP + diphosphate. Aspartyl-tRNA synthetase with relaxed tRNA specificity since it is able to aspartylate not only its cognate tRNA(Asp) but also tRNA(Asn). Reaction proceeds in two steps: L-aspartate is first activated by ATP to form Asp-AMP and then transferred to the acceptor end of tRNA(Asp/Asn). The sequence is that of Aspartate--tRNA(Asp/Asn) ligase from Cupriavidus pinatubonensis (strain JMP 134 / LMG 1197) (Cupriavidus necator (strain JMP 134)).